Here is a 372-residue protein sequence, read N- to C-terminus: Pluviatolide O-methyltransferase (372 aa).

Residues glycine 214, aspartate 237, aspartate 257, methionine 258, and lysine 271 each contribute to the S-adenosyl-L-homocysteine site. Histidine 275 acts as the Proton acceptor in catalysis. Residues aspartate 306 and glutamate 338 contribute to the active site.

It belongs to the class I-like SAM-binding methyltransferase superfamily. Cation-independent O-methyltransferase family. COMT subfamily. Homodimer. In terms of tissue distribution, mostly expressed in stems, and, to a lower extent, in leaves.

The catalysed reaction is (-)-pluviatolide + S-adenosyl-L-methionine = (-)-bursehernin + S-adenosyl-L-homocysteine + H(+). Its pathway is aromatic compound metabolism; phenylpropanoid biosynthesis. O-methyltransferase involved in the biosynthesis of etoposide, a chemotherapeutic compound of the topoisomerase inhibitor family. Catalyzes the methylation of (-)-pluviatolide to produce (-)-bursehernin. This Sinopodophyllum hexandrum (Himalayan may apple) protein is Pluviatolide O-methyltransferase.